A 392-amino-acid chain; its full sequence is 2'-deamino-2'-hydroxyneamine transaminase (392 aa).

K249 is modified (N6-(pyridoxal phosphate)lysine).

Belongs to the class-III pyridoxal-phosphate-dependent aminotransferase family. It depends on pyridoxal 5'-phosphate as a cofactor.

It catalyses the reaction neamine + 2-oxoglutarate = 6'-oxoparomamine + L-glutamate. The catalysed reaction is 2'-deamino-2'-hydroxyneamine + 2-oxoglutarate = 2'-deamino-2'-hydroxy-6'-dehydroparomamine + L-glutamate. It participates in antibiotic biosynthesis; kanamycin biosynthesis. Its function is as follows. Aminotransferase that has 6'-oxoglucosaminyl:L-glutamate aminotransferase activity by catalyzing pyridoxal-5'-phosphate-mediated transamination leading to the conversion of paromamine to neamine in the biosynthetic pathway of kanamycin B. The polypeptide is 2'-deamino-2'-hydroxyneamine transaminase (kacL) (Streptomyces kanamyceticus).